Consider the following 195-residue polypeptide: Imidazoleglycerol-phosphate dehydratase (195 aa).

This sequence belongs to the imidazoleglycerol-phosphate dehydratase family.

The protein localises to the cytoplasm. It carries out the reaction D-erythro-1-(imidazol-4-yl)glycerol 3-phosphate = 3-(imidazol-4-yl)-2-oxopropyl phosphate + H2O. The protein operates within amino-acid biosynthesis; L-histidine biosynthesis; L-histidine from 5-phospho-alpha-D-ribose 1-diphosphate: step 6/9. The sequence is that of Imidazoleglycerol-phosphate dehydratase from Geobacter metallireducens (strain ATCC 53774 / DSM 7210 / GS-15).